The following is a 392-amino-acid chain: Iripin-4 (392 aa).

The signal sequence occupies residues 1-16 (MRSLATFMSLLTICWG). N-linked (GlcNAc...) asparagine glycans are attached at residues N104, N130, and N265.

Belongs to the serpin family. In terms of tissue distribution, female salivary gland.

It is found in the secreted. Serpin with unknown function. Weakly inhibits human granzyme B (GZMB). Acts as a substrate for porcine elastase. The sequence is that of Iripin-4 from Ixodes ricinus (Common tick).